A 513-amino-acid polypeptide reads, in one-letter code: ATP synthase subunit alpha (513 aa).

169–176 (GDRQTGKT) provides a ligand contact to ATP.

It belongs to the ATPase alpha/beta chains family. F-type ATPases have 2 components, CF(1) - the catalytic core - and CF(0) - the membrane proton channel. CF(1) has five subunits: alpha(3), beta(3), gamma(1), delta(1), epsilon(1). CF(0) has three main subunits: a(1), b(2) and c(9-12). The alpha and beta chains form an alternating ring which encloses part of the gamma chain. CF(1) is attached to CF(0) by a central stalk formed by the gamma and epsilon chains, while a peripheral stalk is formed by the delta and b chains.

It is found in the cell inner membrane. The catalysed reaction is ATP + H2O + 4 H(+)(in) = ADP + phosphate + 5 H(+)(out). Its function is as follows. Produces ATP from ADP in the presence of a proton gradient across the membrane. The alpha chain is a regulatory subunit. This chain is ATP synthase subunit alpha, found in Citrobacter koseri (strain ATCC BAA-895 / CDC 4225-83 / SGSC4696).